A 45-amino-acid polypeptide reads, in one-letter code: Photosystem II reaction center protein K (45 aa).

Residues 1–8 (METIYLLA) constitute a propeptide that is removed on maturation. The helical transmembrane segment at 16-40 (IFDPLVDVLPVIPLFFLALAFVWQA) threads the bilayer.

Belongs to the PsbK family. PSII is composed of 1 copy each of membrane proteins PsbA, PsbB, PsbC, PsbD, PsbE, PsbF, PsbH, PsbI, PsbJ, PsbK, PsbL, PsbM, PsbT, PsbX, PsbY, PsbZ, Psb30/Ycf12, peripheral proteins PsbO, CyanoQ (PsbQ), PsbU, PsbV and a large number of cofactors. It forms dimeric complexes.

Its subcellular location is the cellular thylakoid membrane. In terms of biological role, one of the components of the core complex of photosystem II (PSII). PSII is a light-driven water:plastoquinone oxidoreductase that uses light energy to abstract electrons from H(2)O, generating O(2) and a proton gradient subsequently used for ATP formation. It consists of a core antenna complex that captures photons, and an electron transfer chain that converts photonic excitation into a charge separation. This Synechocystis sp. (strain ATCC 27184 / PCC 6803 / Kazusa) protein is Photosystem II reaction center protein K.